We begin with the raw amino-acid sequence, 90 residues long: Protein LURE 1.2 (90 aa).

Residues 1-19 (MKLPIIFLTLLIFVSSCTS) form the signal peptide. N-linked (GlcNAc...) asparagine glycosylation occurs at asparagine 23. 3 disulfide bridges follow: cysteine 58/cysteine 75, cysteine 61/cysteine 82, and cysteine 65/cysteine 84. The tract at residues 67 to 87 (RRGKYIRTCSFERKLCRCSIS) is PRK6 binding.

It belongs to the DEFL family. As to quaternary structure, interacts with MDIS1, MIK1, MIK2 and TDR/PXY, but not with MDIS2. Binds to PRK6 LRRs. In terms of tissue distribution, expressed in the pistil. Detected exclusively in the synergid cells.

It localises to the secreted. Pollen tube attractants guiding pollen tubes to the ovular micropyle. Attracts specifically pollen tubes from A.thaliana, but not those from A.lyrata. Triggers endocytosis of MDIS1 in the pollen tube tip. The sequence is that of Protein LURE 1.2 from Arabidopsis thaliana (Mouse-ear cress).